Here is a 189-residue protein sequence, read N- to C-terminus: Large ribosomal subunit protein bL9 (189 aa).

Belongs to the bacterial ribosomal protein bL9 family.

Functionally, binds to the 23S rRNA. The chain is Large ribosomal subunit protein bL9 from Brucella canis (strain ATCC 23365 / NCTC 10854 / RM-666).